Reading from the N-terminus, the 386-residue chain is Phosphoglycerate kinase (386 aa).

Residues 21–23, Arg-36, 59–62, Arg-112, and Arg-145 each bind substrate; these read DLN and HLGR. Residues Lys-196, Glu-313, and 339-342 contribute to the ATP site; that span reads GGDT.

It belongs to the phosphoglycerate kinase family. In terms of assembly, monomer.

It is found in the cytoplasm. The catalysed reaction is (2R)-3-phosphoglycerate + ATP = (2R)-3-phospho-glyceroyl phosphate + ADP. The protein operates within carbohydrate degradation; glycolysis; pyruvate from D-glyceraldehyde 3-phosphate: step 2/5. In Haemophilus influenzae (strain PittGG), this protein is Phosphoglycerate kinase.